Consider the following 163-residue polypeptide: NADH-quinone oxidoreductase subunit I (163 aa).

2 4Fe-4S ferredoxin-type domains span residues 54–84 (LRRY…IDSA) and 94–123 (TRYD…ETHI). Cysteine 64, cysteine 67, cysteine 70, cysteine 74, cysteine 103, cysteine 106, cysteine 109, and cysteine 113 together coordinate [4Fe-4S] cluster.

This sequence belongs to the complex I 23 kDa subunit family. NDH-1 is composed of 14 different subunits. Subunits NuoA, H, J, K, L, M, N constitute the membrane sector of the complex. [4Fe-4S] cluster is required as a cofactor.

The protein resides in the cell inner membrane. It catalyses the reaction a quinone + NADH + 5 H(+)(in) = a quinol + NAD(+) + 4 H(+)(out). Functionally, NDH-1 shuttles electrons from NADH, via FMN and iron-sulfur (Fe-S) centers, to quinones in the respiratory chain. The immediate electron acceptor for the enzyme in this species is believed to be ubiquinone. Couples the redox reaction to proton translocation (for every two electrons transferred, four hydrogen ions are translocated across the cytoplasmic membrane), and thus conserves the redox energy in a proton gradient. The polypeptide is NADH-quinone oxidoreductase subunit I (Xanthomonas campestris pv. campestris (strain 8004)).